The sequence spans 623 residues: Membrane protein insertase YidC (623 aa).

5 helical membrane passes run 8 to 28, 379 to 399, 449 to 469, 507 to 527, and 543 to 563; these read LILATGLSFLVIMVWFFLFPP, MGLAIIALTFLLKALVLPLAY, LPILIQIPIFFSLYKVIFVTI, TTMALIFIGALPILLGVSMWL, and IFAWMPWVFMFMLGHFASGLV. A compositionally biased stretch (low complexity) spans 601 to 617; sequence KPAAQPAGKAANDGAAP. A disordered region spans residues 601–623; it reads KPAAQPAGKAANDGAAPAKKRKP.

This sequence belongs to the OXA1/ALB3/YidC family. Type 1 subfamily. In terms of assembly, interacts with the Sec translocase complex via SecD. Specifically interacts with transmembrane segments of nascent integral membrane proteins during membrane integration.

Its subcellular location is the cell inner membrane. In terms of biological role, required for the insertion and/or proper folding and/or complex formation of integral membrane proteins into the membrane. Involved in integration of membrane proteins that insert both dependently and independently of the Sec translocase complex, as well as at least some lipoproteins. Aids folding of multispanning membrane proteins. The protein is Membrane protein insertase YidC of Cereibacter sphaeroides (strain ATCC 17023 / DSM 158 / JCM 6121 / CCUG 31486 / LMG 2827 / NBRC 12203 / NCIMB 8253 / ATH 2.4.1.) (Rhodobacter sphaeroides).